A 75-amino-acid polypeptide reads, in one-letter code: Lividin-3 (75 aa).

The first 22 residues, 1–22 (MFTLKKSLLLLFFLGTISLSLC), serve as a signal peptide directing secretion. Positions 23–40 (EEERDADEDEGEMTEEEV) are excised as a propeptide. Cys69 and Cys75 are oxidised to a cystine.

As to expression, expressed by the skin glands.

It localises to the secreted. Antimicrobial peptide. This Odorrana livida (Green mountain frog) protein is Lividin-3.